We begin with the raw amino-acid sequence, 333 residues long: Transcription initiation factor IIB (333 aa).

Residues 33 to 64 (EVYRCPICGNDKFIYNYERGEVVCIVCGAVVQ) form a TFIIB-type zinc finger. The Zn(2+) site is built by cysteine 37, cysteine 40, cysteine 56, and cysteine 59. A run of 2 repeats spans residues 149 to 232 (QELE…LREL) and 243 to 324 (LYIS…ELAK).

Belongs to the TFIIB family.

Stabilizes TBP binding to an archaeal box-A promoter. Also responsible for recruiting RNA polymerase II to the pre-initiation complex (DNA-TBP-TFIIB). In Pyrobaculum neutrophilum (strain DSM 2338 / JCM 9278 / NBRC 100436 / V24Sta) (Thermoproteus neutrophilus), this protein is Transcription initiation factor IIB.